Here is a 288-residue protein sequence, read N- to C-terminus: Probable branched-chain-amino-acid aminotransferase (288 aa).

Residue Lys153 is modified to N6-(pyridoxal phosphate)lysine.

This sequence belongs to the class-IV pyridoxal-phosphate-dependent aminotransferase family. It depends on pyridoxal 5'-phosphate as a cofactor.

It catalyses the reaction L-leucine + 2-oxoglutarate = 4-methyl-2-oxopentanoate + L-glutamate. The enzyme catalyses L-isoleucine + 2-oxoglutarate = (S)-3-methyl-2-oxopentanoate + L-glutamate. The catalysed reaction is L-valine + 2-oxoglutarate = 3-methyl-2-oxobutanoate + L-glutamate. The protein operates within amino-acid biosynthesis; L-isoleucine biosynthesis; L-isoleucine from 2-oxobutanoate: step 4/4. It participates in amino-acid biosynthesis; L-leucine biosynthesis; L-leucine from 3-methyl-2-oxobutanoate: step 4/4. Its pathway is amino-acid biosynthesis; L-valine biosynthesis; L-valine from pyruvate: step 4/4. Acts on leucine, isoleucine and valine. This Rickettsia typhi (strain ATCC VR-144 / Wilmington) protein is Probable branched-chain-amino-acid aminotransferase (ilvE).